A 56-amino-acid chain; its full sequence is Small ribosomal subunit protein uS14z/uS14y/uS14x (56 aa).

Positions 21, 24, 39, and 42 each coordinate Zn(2+).

It belongs to the universal ribosomal protein uS14 family. The cofactor is Zn(2+).

In Arabidopsis thaliana (Mouse-ear cress), this protein is Small ribosomal subunit protein uS14z/uS14y/uS14x (RPS29A).